The chain runs to 346 residues: Cell division protein FtsZ 2 (346 aa).

Residues 23–27, 110–112, glutamate 141, arginine 145, and aspartate 189 contribute to the GTP site; these read GGGGN and GTG. A disordered region spans residues 320–346; the sequence is SNRSAQPTAPEAMNGQTAAAVPSRTLQ.

Belongs to the FtsZ family. As to quaternary structure, homodimer. Polymerizes to form a dynamic ring structure in a strictly GTP-dependent manner. Interacts directly with several other division proteins.

It is found in the cytoplasm. Its function is as follows. Essential cell division protein that forms a contractile ring structure (Z ring) at the future cell division site. The regulation of the ring assembly controls the timing and the location of cell division. One of the functions of the FtsZ ring is to recruit other cell division proteins to the septum to produce a new cell wall between the dividing cells. Binds GTP and shows GTPase activity. The chain is Cell division protein FtsZ 2 from Rhizobium meliloti (strain 1021) (Ensifer meliloti).